The primary structure comprises 299 residues: Small ribosomal subunit biogenesis GTPase RsgA (299 aa).

Residues 64-225 enclose the CP-type G domain; the sequence is KNEMIRPPVA…VGDTPGFSSL (162 aa). GTP-binding positions include 113–116 and 168–176; these read TKTD and GQTGAGKST. Residues Cys249, Cys254, His256, and Cys262 each coordinate Zn(2+).

It belongs to the TRAFAC class YlqF/YawG GTPase family. RsgA subfamily. In terms of assembly, monomer. Associates with 30S ribosomal subunit, binds 16S rRNA. Zn(2+) is required as a cofactor.

The protein localises to the cytoplasm. Its function is as follows. One of several proteins that assist in the late maturation steps of the functional core of the 30S ribosomal subunit. Helps release RbfA from mature subunits. May play a role in the assembly of ribosomal proteins into the subunit. Circularly permuted GTPase that catalyzes slow GTP hydrolysis, GTPase activity is stimulated by the 30S ribosomal subunit. This Latilactobacillus sakei subsp. sakei (strain 23K) (Lactobacillus sakei subsp. sakei) protein is Small ribosomal subunit biogenesis GTPase RsgA.